The following is a 257-amino-acid chain: THAP domain-containing protein 11 (257 aa).

The segment at 6–64 (CCVPGCYNNSHRDRDLRFYTFPKDPTQREIWLKNISRAGVSGCFSTFQPTTGHRVCSVH) adopts a THAP-type zinc-finger fold. The stretch at 196–251 (ELLRKLNEQRDIIALMEIKMKEMKNTIRQLRVTEARLQDELRQREQERERLICANT) forms a coiled coil.

Belongs to the THAP11 family.

Its subcellular location is the nucleus. The protein resides in the cytoplasm. In terms of biological role, transcription factor, which has both transcriptional activation and repression activities. Binds numerous promoters of genes and therefore can be involved in many processes. Also modulates chromatin accessibility. Required for normal brain development and neural precursor differentiation. The chain is THAP domain-containing protein 11 (thap11) from Danio rerio (Zebrafish).